We begin with the raw amino-acid sequence, 128 residues long: Small ribosomal subunit protein uS9 (128 aa).

The disordered stretch occupies residues 106–128; it reads SRKVERKKPGRPKARKKFQFSKR. Over residues 109-128 the composition is skewed to basic residues; the sequence is VERKKPGRPKARKKFQFSKR.

Belongs to the universal ribosomal protein uS9 family.

This Azobacteroides pseudotrichonymphae genomovar. CFP2 protein is Small ribosomal subunit protein uS9.